A 382-amino-acid polypeptide reads, in one-letter code: O-methyltransferase okaF (382 aa).

Glutamate 249 and arginine 287 together coordinate S-adenosyl-L-methionine. Histidine 291 serves as the catalytic Proton acceptor.

It belongs to the class I-like SAM-binding methyltransferase superfamily. Cation-independent O-methyltransferase family.

It carries out the reaction 3-desmethyl okaramine B + S-adenosyl-L-methionine = okaramine B + S-adenosyl-L-homocysteine + H(+). Its pathway is alkaloid biosynthesis. In terms of biological role, O-methyltransferase; part of the gene cluster that mediates the biosynthesis of okaramine B, a prenylated indole alkaloid that possesses an unusual octacyclic ring system, including a four-membered azetidine ring and an eight-membered azocine ring, and that exhibits insecticidal activity against silkworm larvae. Within the pathway, okaF catalyzes the last step which is the methylation of 3-desmethyl okaramine B to produce okaramine B. With okaG, OkaF is also able to produce okaramine D from okaramine E. The biosynthesis begins with the NRPS okaA that condenses two tryptophan molecules into cyclo(L-Trp-L-Trp). Prenylation by the prenyltransferase okaC then leads to the formation of cyclo(N8-(alpha,alpha-dimethylallyl)-L-Trp-6a-(alpha,alpha-dime-thylallyl)-L-Trp). This is followed by indole 2,3-epoxidation by the FAD-dependent monooxygenase okaB to facilitate the formation of the hexahydropyrrolo[2,3-b]indole (HPI) moiety of okaramine C. The cytochrome P450 monooxygenase okaD then likely catalyzes formation of the eight-membered ring of okaramine A. The dioxygenase okaE further forms the unusual 2-dimethyl-3-methyl-azetidine ring to yield 12-deshydroxyl okaramine E, as well as the hydroxylation of 12-deshydroxyl okaramine E to produce okaramine E. The cytochrome P450 monoxygenase okaG converts 12-deshydroxyl okaramine E into 3-desmethyl okaramine B which is further methylated by the methyltransferase okaF into okaramine B. In a shunt pathway, okaG and okaF together are also able to convert okaramine E into okaramine D. Okaramine H is produced by nonenzymatic conversion from okaramine A. The sequence is that of O-methyltransferase okaF from Penicillium ochrochloron.